Here is a 370-residue protein sequence, read N- to C-terminus: Glutamine synthetase (370 aa).

Ala-2 is modified (N-acetylalanine). Residue Ser-5 is modified to Phosphoserine. A GS beta-grasp domain is found at 24-103 (IIAEYVWIDG…VLAACYNNDG (80 aa)). In terms of domain architecture, GS catalytic spans 110-370 (HRHEAAKLFA…MTKEFERESS (261 aa)). Glycyl lysine isopeptide (Lys-Gly) (interchain with G-Cter in ubiquitin) cross-links involve residues Lys-283, Lys-324, and Lys-363.

Belongs to the glutamine synthetase family. As to quaternary structure, homooctamer.

The protein resides in the cytoplasm. The catalysed reaction is L-glutamate + NH4(+) + ATP = L-glutamine + ADP + phosphate + H(+). The chain is Glutamine synthetase (GLN1) from Saccharomyces cerevisiae (strain ATCC 204508 / S288c) (Baker's yeast).